Consider the following 163-residue polypeptide: ATP synthase subunit b 1 (163 aa).

Residues 5 to 25 (FDATFFAFVGLILFLALVVYL) form a helical membrane-spanning segment.

It belongs to the ATPase B chain family. As to quaternary structure, F-type ATPases have 2 components, F(1) - the catalytic core - and F(0) - the membrane proton channel. F(1) has five subunits: alpha(3), beta(3), gamma(1), delta(1), epsilon(1). F(0) has three main subunits: a(1), b(2) and c(10-14). The alpha and beta chains form an alternating ring which encloses part of the gamma chain. F(1) is attached to F(0) by a central stalk formed by the gamma and epsilon chains, while a peripheral stalk is formed by the delta and b chains.

The protein resides in the cell inner membrane. Functionally, f(1)F(0) ATP synthase produces ATP from ADP in the presence of a proton or sodium gradient. F-type ATPases consist of two structural domains, F(1) containing the extramembraneous catalytic core and F(0) containing the membrane proton channel, linked together by a central stalk and a peripheral stalk. During catalysis, ATP synthesis in the catalytic domain of F(1) is coupled via a rotary mechanism of the central stalk subunits to proton translocation. Its function is as follows. Component of the F(0) channel, it forms part of the peripheral stalk, linking F(1) to F(0). This Rhizobium etli (strain ATCC 51251 / DSM 11541 / JCM 21823 / NBRC 15573 / CFN 42) protein is ATP synthase subunit b 1.